The chain runs to 50 residues: U23-theraphotoxin-Cg1a 2 (50 aa).

3 disulfides stabilise this stretch: C22–C36, C29–C41, and C35–C47.

The protein belongs to the neurotoxin 10 (Hwtx-1) family. 64 (Jztx-20) subfamily. As to expression, expressed by the venom gland.

It localises to the secreted. Functionally, probable ion channel inhibitor. The chain is U23-theraphotoxin-Cg1a 2 from Chilobrachys guangxiensis (Chinese earth tiger tarantula).